The primary structure comprises 250 residues: Methionine aminopeptidase (250 aa).

Position 77 (histidine 77) interacts with substrate. Residues aspartate 94, aspartate 105, and histidine 169 each contribute to the a divalent metal cation site. A substrate-binding site is contributed by histidine 176. Glutamate 202 and glutamate 235 together coordinate a divalent metal cation.

Belongs to the peptidase M24A family. Methionine aminopeptidase type 1 subfamily. As to quaternary structure, monomer. Co(2+) is required as a cofactor. It depends on Zn(2+) as a cofactor. The cofactor is Mn(2+). Fe(2+) serves as cofactor.

The catalysed reaction is Release of N-terminal amino acids, preferentially methionine, from peptides and arylamides.. Removes the N-terminal methionine from nascent proteins. The N-terminal methionine is often cleaved when the second residue in the primary sequence is small and uncharged (Met-Ala-, Cys, Gly, Pro, Ser, Thr, or Val). Requires deformylation of the N(alpha)-formylated initiator methionine before it can be hydrolyzed. The protein is Methionine aminopeptidase of Mycoplasmoides gallisepticum (strain R(low / passage 15 / clone 2)) (Mycoplasma gallisepticum).